The sequence spans 463 residues: ATP-dependent protease ATPase subunit HslU (463 aa).

Residues Ile-19, 61–66 (GVGKTE), Asp-277, Glu-341, and Arg-413 contribute to the ATP site.

It belongs to the ClpX chaperone family. HslU subfamily. A double ring-shaped homohexamer of HslV is capped on each side by a ring-shaped HslU homohexamer. The assembly of the HslU/HslV complex is dependent on binding of ATP.

The protein resides in the cytoplasm. Its function is as follows. ATPase subunit of a proteasome-like degradation complex; this subunit has chaperone activity. The binding of ATP and its subsequent hydrolysis by HslU are essential for unfolding of protein substrates subsequently hydrolyzed by HslV. HslU recognizes the N-terminal part of its protein substrates and unfolds these before they are guided to HslV for hydrolysis. The polypeptide is ATP-dependent protease ATPase subunit HslU (Bacillus anthracis (strain A0248)).